We begin with the raw amino-acid sequence, 594 residues long: A-type ATP synthase subunit A (594 aa).

Position 236–243 (236–243 (GPFGSGKT)) interacts with ATP.

This sequence belongs to the ATPase alpha/beta chains family. Has multiple subunits with at least A(3), B(3), C, D, E, F, H, I and proteolipid K(x).

The protein localises to the cell membrane. It catalyses the reaction ATP + H2O + 4 H(+)(in) = ADP + phosphate + 5 H(+)(out). Component of the A-type ATP synthase that produces ATP from ADP in the presence of a proton gradient across the membrane. The A chain is the catalytic subunit. The polypeptide is A-type ATP synthase subunit A (Pyrobaculum calidifontis (strain DSM 21063 / JCM 11548 / VA1)).